The primary structure comprises 335 residues: Tryptophan--tRNA ligase (335 aa).

Residues 13 to 15 and 21 to 22 each bind ATP; these read QPS and GN. A 'HIGH' region motif is present at residues 14-22; the sequence is PSGNLTIGN. Asp136 is an L-tryptophan binding site. Residues 148-150, Ile187, and 196-200 each bind ATP; these read GQD and KMSKS. Positions 196–200 match the 'KMSKS' region motif; that stretch reads KMSKS.

This sequence belongs to the class-I aminoacyl-tRNA synthetase family. In terms of assembly, homodimer.

The protein resides in the cytoplasm. The enzyme catalyses tRNA(Trp) + L-tryptophan + ATP = L-tryptophyl-tRNA(Trp) + AMP + diphosphate + H(+). Functionally, catalyzes the attachment of tryptophan to tRNA(Trp). In Buchnera aphidicola subsp. Acyrthosiphon pisum (strain APS) (Acyrthosiphon pisum symbiotic bacterium), this protein is Tryptophan--tRNA ligase.